Consider the following 400-residue polypeptide: 3-hydroxybenzoate 6-hydroxylase (400 aa).

It belongs to the 3-hydroxybenzoate 6-hydroxylase family. Monomer. The cofactor is FAD.

It catalyses the reaction 3-hydroxybenzoate + NADH + O2 + H(+) = 2,5-dihydroxybenzoate + NAD(+) + H2O. Functionally, catalyzes the NAD- or NADP-dependent conversion of 3-hydroxybenzoate to gentisate. The affinity of the enzyme toward NAD is twice as high as for NADP. The protein is 3-hydroxybenzoate 6-hydroxylase (nagX) of Polaromonas naphthalenivorans (strain CJ2).